The sequence spans 77 residues: Large ribosomal subunit protein bL31 (77 aa).

This sequence belongs to the bacterial ribosomal protein bL31 family. Type A subfamily. Part of the 50S ribosomal subunit.

Its function is as follows. Binds the 23S rRNA. This chain is Large ribosomal subunit protein bL31, found in Microcystis aeruginosa (strain NIES-843 / IAM M-2473).